Reading from the N-terminus, the 596-residue chain is Merlin (596 aa).

Phosphoserine is present on S13. The FERM domain occupies 22-311; the sequence is FTVRIVTMDA…GNHDLFMRRR (290 aa). S518 bears the Phosphoserine; by PAK mark. The interval 560 to 580 is disordered; it reads VLHSESSDRGGPSSKHNTIKK.

Interacts with NHERF1, HGS and AGAP2. Interacts with SGSM3. Interacts (via FERM domain) with MPP1. Interacts with LAYN. Interacts with WWC1. Interacts with the CUL4A-RBX1-DDB1-VprBP/DCAF1 E3 ubiquitin-protein ligase complex. The unphosphorylated form interacts (via FERM domain) with VPRBP/DCAF1. Interacts (via FERM domain) with NOP53; the interaction is direct. Interacts with SCHIP1; the interaction is direct. Post-translationally, phosphorylation of Ser-518 inhibits nuclear localization by disrupting the intramolecular association of the FERM domain with the C-terminal tail. The dephosphorylation of Ser-518 favors the interaction with NOP53. Ubiquitinated by the CUL4A-RBX1-DDB1-DCAF1/VprBP E3 ubiquitin-protein ligase complex for ubiquitination and subsequent proteasome-dependent degradation.

The protein resides in the cell membrane. It localises to the cell projection. Its subcellular location is the cytoplasm. It is found in the cytoskeleton. The protein localises to the nucleus. Its function is as follows. Probable regulator of the Hippo/SWH (Sav/Wts/Hpo) signaling pathway, a signaling pathway that plays a pivotal role in tumor suppression by restricting proliferation and promoting apoptosis. Along with WWC1 can synergistically induce the phosphorylation of LATS1 and LATS2 and can probably function in the regulation of the Hippo/SWH (Sav/Wts/Hpo) signaling pathway. May act as a membrane stabilizing protein. May inhibit PI3 kinase by binding to AGAP2 and impairing its stimulating activity. Suppresses cell proliferation and tumorigenesis by inhibiting the CUL4A-RBX1-DDB1-VprBP/DCAF1 E3 ubiquitin-protein ligase complex. Plays a role in lens development and is required for complete fiber cell terminal differentiation, maintenance of cell polarity and separation of the lens vesicle from the corneal epithelium. This chain is Merlin (Nf2), found in Mus musculus (Mouse).